A 268-amino-acid polypeptide reads, in one-letter code: 3-methyl-2-oxobutanoate hydroxymethyltransferase (268 aa).

Positions 46 and 85 each coordinate Mg(2+). 3-methyl-2-oxobutanoate-binding positions include 46–47 (DS), aspartate 85, and lysine 114. Glutamate 116 is a binding site for Mg(2+). Residue glutamate 183 is the Proton acceptor of the active site.

The protein belongs to the PanB family. As to quaternary structure, homodecamer; pentamer of dimers. Mg(2+) serves as cofactor.

Its subcellular location is the cytoplasm. It carries out the reaction 3-methyl-2-oxobutanoate + (6R)-5,10-methylene-5,6,7,8-tetrahydrofolate + H2O = 2-dehydropantoate + (6S)-5,6,7,8-tetrahydrofolate. It participates in cofactor biosynthesis; coenzyme A biosynthesis. Functionally, catalyzes the reversible reaction in which hydroxymethyl group from 5,10-methylenetetrahydrofolate is transferred onto alpha-ketoisovalerate to form ketopantoate. This Sulfolobus acidocaldarius (strain ATCC 33909 / DSM 639 / JCM 8929 / NBRC 15157 / NCIMB 11770) protein is 3-methyl-2-oxobutanoate hydroxymethyltransferase.